A 464-amino-acid chain; its full sequence is Argininosuccinate lyase (464 aa).

The protein belongs to the lyase 1 family. Argininosuccinate lyase subfamily.

It is found in the cytoplasm. It catalyses the reaction 2-(N(omega)-L-arginino)succinate = fumarate + L-arginine. It participates in amino-acid biosynthesis; L-arginine biosynthesis; L-arginine from L-ornithine and carbamoyl phosphate: step 3/3. The protein is Argininosuccinate lyase of Ectopseudomonas mendocina (strain ymp) (Pseudomonas mendocina).